The following is a 134-amino-acid chain: Large ribosomal subunit protein uL16c (134 aa).

This sequence belongs to the universal ribosomal protein uL16 family. Part of the 50S ribosomal subunit.

The protein resides in the plastid. Its subcellular location is the chloroplast. The chain is Large ribosomal subunit protein uL16c from Nephroselmis olivacea (Green alga).